A 615-amino-acid chain; its full sequence is 9-cis-epoxycarotenoid dioxygenase NCED1, chloroplastic (615 aa).

Residues 1–41 constitute a chloroplast transit peptide; the sequence is MPSPASNTWINTTLPSSCSSPFKDLASTSSSPTTLLPFKKR. 2 disordered regions span residues 20 to 45 and 62 to 101; these read SPFKDLASTSSSPTTLLPFKKRSSSN and YQPTSTSTTTTPTPIKPTTTTTTTTPHRETKPLSDTKQPF. 2 stretches are compositionally biased toward low complexity: residues 27–37 and 64–86; these read STSSSPTTLLP and PTSTSTTTTPTPIKPTTTTTTTT. 3 residues coordinate Fe cation: His316, His365, and His430. Positions 571-592 form a coiled coil; it reads KEWKSELQIVNAQNLKLEASIK. A Fe cation-binding site is contributed by His602.

This sequence belongs to the carotenoid oxygenase family. It depends on Fe(2+) as a cofactor.

It localises to the plastid. It is found in the chloroplast thylakoid membrane. The catalysed reaction is a 9-cis-epoxycarotenoid + O2 = a 12'-apo-carotenal + 2-cis,4-trans-xanthoxin. It catalyses the reaction 9-cis-violaxanthin + O2 = (3S,5R,6S)-5,6-epoxy-3-hydroxy-5,6-dihydro-12'-apo-beta-caroten-12'-al + 2-cis,4-trans-xanthoxin. It carries out the reaction 9'-cis-neoxanthin + O2 = (3S,5R,6R)-3,5-dihydroxy-6,7-didehydro-5,6-dihydro-12'-apo-beta-caroten-12'-al + 2-cis,4-trans-xanthoxin. Has a 11,12(11',12') 9-cis epoxycarotenoid cleavage activity. Catalyzes the first step of abscisic-acid biosynthesis from carotenoids, in response to water stress. Active on 9-cis-violaxanthin and 9'-cis-neoxanthin, but not on the all-trans isomers of violaxanthin and neoxanthin. The sequence is that of 9-cis-epoxycarotenoid dioxygenase NCED1, chloroplastic (NCED1) from Phaseolus vulgaris (Kidney bean).